We begin with the raw amino-acid sequence, 382 residues long: ATP phosphoribosyltransferase regulatory subunit (382 aa).

It belongs to the class-II aminoacyl-tRNA synthetase family. HisZ subfamily. As to quaternary structure, heteromultimer composed of HisG and HisZ subunits.

The protein resides in the cytoplasm. Its pathway is amino-acid biosynthesis; L-histidine biosynthesis; L-histidine from 5-phospho-alpha-D-ribose 1-diphosphate: step 1/9. Functionally, required for the first step of histidine biosynthesis. May allow the feedback regulation of ATP phosphoribosyltransferase activity by histidine. The sequence is that of ATP phosphoribosyltransferase regulatory subunit from Burkholderia ambifaria (strain MC40-6).